The sequence spans 91 residues: MARVTVEDCLEHVDNRFELTLVAARRARQLASGAAPEVEPGRDKNTVIALREVAAGKVSRAILDEQMPPPLPNFPGAANREATGAEDAAGE.

The tract at residues 66 to 91 (QMPPPLPNFPGAANREATGAEDAAGE) is disordered.

This sequence belongs to the RNA polymerase subunit omega family. As to quaternary structure, the RNAP catalytic core consists of 2 alpha, 1 beta, 1 beta' and 1 omega subunit. When a sigma factor is associated with the core the holoenzyme is formed, which can initiate transcription.

It carries out the reaction RNA(n) + a ribonucleoside 5'-triphosphate = RNA(n+1) + diphosphate. Functionally, promotes RNA polymerase assembly. Latches the N- and C-terminal regions of the beta' subunit thereby facilitating its interaction with the beta and alpha subunits. This chain is DNA-directed RNA polymerase subunit omega, found in Acidithiobacillus ferrooxidans (strain ATCC 23270 / DSM 14882 / CIP 104768 / NCIMB 8455) (Ferrobacillus ferrooxidans (strain ATCC 23270)).